Reading from the N-terminus, the 221-residue chain is Protein Thf1 (221 aa).

Positions 174 to 213 (TKERVEKDVNLYKSSLDKIEKALELIEMNIKDEKRRNKER) form a coiled coil.

Belongs to the THF1 family.

Its function is as follows. May be involved in photosynthetic membrane biogenesis. This is Protein Thf1 from Prochlorococcus marinus (strain MIT 9211).